Reading from the N-terminus, the 347-residue chain is NADH-ubiquinone oxidoreductase chain 2 (347 aa).

9 consecutive transmembrane segments (helical) span residues 3–23, 25–45, 59–79, 111–131, 149–169, 200–220, 242–262, 274–294, and 325–345; these read PPIF…VLIS, HWLL…PILM, YFLT…INLL, FHFW…MILL, INPN…GWGG, LMHL…MLFM, LLIL…GFIP, NMII…YFYM, and LLPP…MMLI.

The protein belongs to the complex I subunit 2 family. In terms of assembly, core subunit of respiratory chain NADH dehydrogenase (Complex I) which is composed of 45 different subunits. Interacts with TMEM242.

The protein localises to the mitochondrion inner membrane. The catalysed reaction is a ubiquinone + NADH + 5 H(+)(in) = a ubiquinol + NAD(+) + 4 H(+)(out). In terms of biological role, core subunit of the mitochondrial membrane respiratory chain NADH dehydrogenase (Complex I) which catalyzes electron transfer from NADH through the respiratory chain, using ubiquinone as an electron acceptor. Essential for the catalytic activity and assembly of complex I. This chain is NADH-ubiquinone oxidoreductase chain 2, found in Ailurus fulgens (Himalayan red panda).